Here is a 247-residue protein sequence, read N- to C-terminus: Probable membrane transporter protein y4hK (247 aa).

6 consecutive transmembrane segments (helical) span residues 5 to 25, 31 to 51, 74 to 94, 121 to 141, 202 to 222, and 227 to 247; these read AIGLAIAFFVIALAYAAVGQA, IAAMALSGFSPLAIKPTALAL, VYPFAILGFPASALGGSVHLP, SALVITIPKTPPLHAALITGA, FLPWWLIAVAAGGSIGALIGS, and ASWLRVILSVLLMVSGLKLLW.

The protein belongs to the 4-toluene sulfonate uptake permease (TSUP) (TC 2.A.102) family.

It localises to the cell membrane. In Sinorhizobium fredii (strain NBRC 101917 / NGR234), this protein is Probable membrane transporter protein y4hK.